The following is a 343-amino-acid chain: Ribosome production factor 1 (343 aa).

Composition is skewed to basic and acidic residues over residues M1–K10 and E82–P91. Disordered regions lie at residues M1–I51 and K77–K97. The region spanning P136–D319 is the Brix domain. The tract at residues V297–Q314 is RNA-binding.

Its subcellular location is the nucleus. The protein resides in the nucleolus. Its function is as follows. May be required for ribosome biogenesis. In Xenopus laevis (African clawed frog), this protein is Ribosome production factor 1 (rpf1).